Here is a 159-residue protein sequence, read N- to C-terminus: Bacterioferritin (159 aa).

One can recognise a Ferritin-like diiron domain in the interval 1-145 (MQGDPDVLRL…TQLALMGQLG (145 aa)). 2 residues coordinate Fe cation: glutamate 18 and glutamate 51. Methionine 52 contributes to the heme b binding site. Positions 54, 94, 127, and 130 each coordinate Fe cation.

Belongs to the bacterioferritin family. Homooligomer of 24 subunits, arranged as 12 dimers, that are packed together to form an approximately spherical molecule with a central cavity, in which large amounts of iron can be deposited. Requires heme b as cofactor.

It localises to the cytoplasm. Its subcellular location is the cytosol. The protein localises to the membrane. It carries out the reaction 4 Fe(2+) + O2 + 4 H(+) = 4 Fe(3+) + 2 H2O. The catalysed reaction is Fe(2+)(in) = Fe(2+)(out). Functionally, iron-storage protein, whose ferroxidase center binds Fe(2+), oxidizes it using dioxygen to Fe(3+), and participates in the subsequent Fe(3+) oxide mineral core formation within the central cavity of the BFR protein shell. Probably plays a crucial role in the intracellular existence of this organism by functioning as a temporary depository for iron in iron deprivation. This is Bacterioferritin (bfr) from Mycobacterium leprae (strain TN).